Here is a 229-residue protein sequence, read N- to C-terminus: Potassium/proton antiporter CemA (229 aa).

3 helical membrane passes run 6-26, 107-127, and 189-209; these read AFIP…ISLC, ILHF…SFWG, and ILSG…KYWI.

The protein belongs to the CemA family.

The protein resides in the plastid. Its subcellular location is the chloroplast inner membrane. It carries out the reaction K(+)(in) + H(+)(out) = K(+)(out) + H(+)(in). Contributes to K(+)/H(+) antiport activity by supporting proton efflux to control proton extrusion and homeostasis in chloroplasts in a light-dependent manner to modulate photosynthesis. Prevents excessive induction of non-photochemical quenching (NPQ) under continuous-light conditions. Indirectly promotes efficient inorganic carbon uptake into chloroplasts. The protein is Potassium/proton antiporter CemA of Arabidopsis thaliana (Mouse-ear cress).